Reading from the N-terminus, the 240-residue chain is Proteasome subunit beta type-1 (240 aa).

Position 1 is an N-acetylmethionine (methionine 1). Positions 1 to 27 (MLSTAAYRDPDRELVMGPQGSAGPVQM) are excised as a propeptide. Serine 57 carries O-linked (GlcNAc) serine glycosylation. Serine 61 and serine 67 each carry phosphoserine. The residue at position 149 (tyrosine 149) is a Phosphotyrosine. A Phosphoserine modification is found at serine 161. Lysine 203 carries the N6-acetyllysine modification. Serine 208 carries O-linked (GlcNAc) serine glycosylation.

It belongs to the peptidase T1B family. The 26S proteasome consists of a 20S proteasome core and two 19S regulatory subunits. The 20S proteasome core is a barrel-shaped complex made of 28 subunits that are arranged in four stacked rings. The two outer rings are each formed by seven alpha subunits, and the two inner rings are formed by seven beta subunits. The proteolytic activity is exerted by three beta-subunits PSMB5, PSMB6 and PSMB7. Interacts with SERPINB2. Interacts with RFPL4A. In terms of tissue distribution, ubiquitous.

It localises to the cytoplasm. The protein localises to the nucleus. Its function is as follows. Non-catalytic component of the 20S core proteasome complex involved in the proteolytic degradation of most intracellular proteins. This complex plays numerous essential roles within the cell by associating with different regulatory particles. Associated with two 19S regulatory particles, forms the 26S proteasome and thus participates in the ATP-dependent degradation of ubiquitinated proteins. The 26S proteasome plays a key role in the maintenance of protein homeostasis by removing misfolded or damaged proteins that could impair cellular functions, and by removing proteins whose functions are no longer required. Associated with the PA200 or PA28, the 20S proteasome mediates ubiquitin-independent protein degradation. This type of proteolysis is required in several pathways including spermatogenesis (20S-PA200 complex) or generation of a subset of MHC class I-presented antigenic peptides (20S-PA28 complex). The sequence is that of Proteasome subunit beta type-1 (Psmb1) from Rattus norvegicus (Rat).